The following is a 183-amino-acid chain: NADH-quinone oxidoreductase subunit I (183 aa).

2 consecutive 4Fe-4S ferredoxin-type domains span residues 71 to 100 (KRDEQGRENCTACGLCALSCPAEAITMKAA) and 117 to 146 (EIYEINMLRCIFCGLCEEACPKDAIYLTTS). Residues Cys-80, Cys-83, Cys-86, Cys-90, Cys-126, Cys-129, Cys-132, and Cys-136 each contribute to the [4Fe-4S] cluster site.

The protein belongs to the complex I 23 kDa subunit family. NDH-1 is composed of 14 different subunits. Subunits NuoA, H, J, K, L, M, N constitute the membrane sector of the complex. [4Fe-4S] cluster is required as a cofactor.

It is found in the cell inner membrane. The enzyme catalyses a quinone + NADH + 5 H(+)(in) = a quinol + NAD(+) + 4 H(+)(out). Its function is as follows. NDH-1 shuttles electrons from NADH, via FMN and iron-sulfur (Fe-S) centers, to quinones in the respiratory chain. The immediate electron acceptor for the enzyme in this species is believed to be ubiquinone. Couples the redox reaction to proton translocation (for every two electrons transferred, four hydrogen ions are translocated across the cytoplasmic membrane), and thus conserves the redox energy in a proton gradient. The sequence is that of NADH-quinone oxidoreductase subunit I from Flavobacterium psychrophilum (strain ATCC 49511 / DSM 21280 / CIP 103535 / JIP02/86).